The primary structure comprises 288 residues: Quinate/shikimate dehydrogenase (288 aa).

Substrate is bound by residues Lys-71 and Asp-107. NAD(+) is bound by residues 132–135 (AGGA), 155–158 (NRRD), Lys-205, 232–235 (CVYN), and Gly-255.

It belongs to the shikimate dehydrogenase family. Homodimer.

It catalyses the reaction L-quinate + NAD(+) = 3-dehydroquinate + NADH + H(+). The enzyme catalyses L-quinate + NADP(+) = 3-dehydroquinate + NADPH + H(+). It carries out the reaction shikimate + NADP(+) = 3-dehydroshikimate + NADPH + H(+). The catalysed reaction is shikimate + NAD(+) = 3-dehydroshikimate + NADH + H(+). Its pathway is metabolic intermediate biosynthesis; chorismate biosynthesis; chorismate from D-erythrose 4-phosphate and phosphoenolpyruvate: step 4/7. Functionally, the actual biological function of YdiB remains unclear, nor is it known whether 3-dehydroshikimate or quinate represents the natural substrate. Catalyzes the reversible NAD-dependent reduction of both 3-dehydroshikimate (DHSA) and 3-dehydroquinate to yield shikimate (SA) and quinate, respectively. It can use both NAD or NADP for catalysis, however it has higher catalytic efficiency with NAD. The polypeptide is Quinate/shikimate dehydrogenase (Escherichia coli O157:H7).